A 185-amino-acid chain; its full sequence is RRM domain-containing protein ECU09_1470 (185 aa).

2 RRM domains span residues 8 to 87 (NQLA…YAKR) and 101 to 170 (KKVY…PAYE).

This is RRM domain-containing protein ECU09_1470 from Encephalitozoon cuniculi (strain GB-M1) (Microsporidian parasite).